A 264-amino-acid polypeptide reads, in one-letter code: NAD kinase 1 (264 aa).

Catalysis depends on Asp45, which acts as the Proton acceptor. NAD(+) is bound by residues 45–46 (DG), 122–123 (NE), Arg148, Asp150, 161–166 (TAYNKS), and Ala185.

The protein belongs to the NAD kinase family. A divalent metal cation serves as cofactor.

It is found in the cytoplasm. It catalyses the reaction NAD(+) + ATP = ADP + NADP(+) + H(+). Its function is as follows. Involved in the regulation of the intracellular balance of NAD and NADP, and is a key enzyme in the biosynthesis of NADP. Catalyzes specifically the phosphorylation on 2'-hydroxyl of the adenosine moiety of NAD to yield NADP. This chain is NAD kinase 1, found in Listeria innocua serovar 6a (strain ATCC BAA-680 / CLIP 11262).